A 235-amino-acid polypeptide reads, in one-letter code: Uridylate kinase (235 aa).

9-12 (KLSG) contacts ATP. An involved in allosteric activation by GTP region spans residues 17 to 22 (GDQGYG). UMP is bound at residue G51. Positions 52 and 56 each coordinate ATP. Residues D71 and 132-139 (CGNPFFTT) each bind UMP. ATP is bound by residues T159, Y165, and D168.

Belongs to the UMP kinase family. In terms of assembly, homohexamer.

It localises to the cytoplasm. The enzyme catalyses UMP + ATP = UDP + ADP. Its pathway is pyrimidine metabolism; CTP biosynthesis via de novo pathway; UDP from UMP (UMPK route): step 1/1. Allosterically activated by GTP. Inhibited by UTP. Catalyzes the reversible phosphorylation of UMP to UDP. The polypeptide is Uridylate kinase (Synechococcus sp. (strain WH7803)).